The chain runs to 228 residues: 5'-methylthioadenosine/S-adenosylhomocysteine nucleosidase (228 aa).

Residue Glu-11 is the Proton acceptor of the active site. Substrate is bound by residues Gly-77, Ile-151, and 172–173 (ME). The Proton donor role is filled by Asp-196.

The protein belongs to the PNP/UDP phosphorylase family. MtnN subfamily.

The catalysed reaction is S-adenosyl-L-homocysteine + H2O = S-(5-deoxy-D-ribos-5-yl)-L-homocysteine + adenine. The enzyme catalyses S-methyl-5'-thioadenosine + H2O = 5-(methylsulfanyl)-D-ribose + adenine. It carries out the reaction 5'-deoxyadenosine + H2O = 5-deoxy-D-ribose + adenine. It participates in amino-acid biosynthesis; L-methionine biosynthesis via salvage pathway; S-methyl-5-thio-alpha-D-ribose 1-phosphate from S-methyl-5'-thioadenosine (hydrolase route): step 1/2. Catalyzes the irreversible cleavage of the glycosidic bond in both 5'-methylthioadenosine (MTA) and S-adenosylhomocysteine (SAH/AdoHcy) to adenine and the corresponding thioribose, 5'-methylthioribose and S-ribosylhomocysteine, respectively. Also cleaves 5'-deoxyadenosine, a toxic by-product of radical S-adenosylmethionine (SAM) enzymes, into 5-deoxyribose and adenine. The protein is 5'-methylthioadenosine/S-adenosylhomocysteine nucleosidase of Staphylococcus aureus (strain bovine RF122 / ET3-1).